The chain runs to 107 residues: Ferredoxin Fdx8 (107 aa).

2 4Fe-4S ferredoxin-type domains span residues 1-31 (MAYV…GPLA) and 50-79 (LQLY…DEDE). Positions 9, 13, 17, 21, 59, 62, 65, and 69 each coordinate [4Fe-4S] cluster.

The cofactor is [4Fe-4S] cluster.

Functionally, ferredoxins are iron-sulfur proteins that transfer electrons in a wide variety of metabolic reactions. Fdx2 can receive electrons from both FdR_A and FdR_B ferredoxin reductases, with a preference for FdR_B compared with FdR_A, and transfer the electrons to the cytochrome P450 CYP260A1. This chain is Ferredoxin Fdx8, found in Sorangium cellulosum (strain So ce56) (Polyangium cellulosum (strain So ce56)).